Here is a 149-residue protein sequence, read N- to C-terminus: Transcriptional repressor NrdR (149 aa).

The segment at 3 to 34 is a zinc-finger region; the sequence is CPFCAAVDTKVIDSRLVGDGSQVRRRRQCLVC. An ATP-cone domain is found at 49 to 139; that stretch reads PRVIKSDEVR…VYRSFEDIRE (91 aa).

This sequence belongs to the NrdR family. Requires Zn(2+) as cofactor.

In terms of biological role, negatively regulates transcription of bacterial ribonucleotide reductase nrd genes and operons by binding to NrdR-boxes. The chain is Transcriptional repressor NrdR from Serratia proteamaculans (strain 568).